A 276-amino-acid polypeptide reads, in one-letter code: Cruxhalorhodopsin-3 (276 aa).

A propeptide spanning residues Met-1 to Gly-21 is cleaved from the precursor. Residues Glu-22–Ser-25 lie on the Extracellular side of the membrane. The helical transmembrane segment at Asn-26–Gly-51 threads the bilayer. The Cytoplasmic segment spans residues Arg-52–Ser-57. Residues Arg-58–Ala-81 traverse the membrane as a helical segment. Topologically, residues Ser-82–Pro-105 are extracellular. A helical transmembrane segment spans residues Trp-106–Ala-127. At Asp-128–Asp-130 the chain is on the cytoplasmic side. Residues Met-131–Val-154 form a helical membrane-spanning segment. Residues Thr-155–Ser-157 lie on the Extracellular side of the membrane. Residues His-158–Leu-180 form a helical membrane-spanning segment. Residues Val-181–Thr-192 lie on the Cytoplasmic side of the membrane. The chain crosses the membrane as a helical span at residues Ser-193–Leu-216. Topologically, residues Gly-217 to Ser-225 are extracellular. A helical transmembrane segment spans residues Val-226–Ala-254. An N6-(retinylidene)lysine modification is found at Lys-241. Over Asn-255–Asp-276 the chain is Cytoplasmic.

It belongs to the archaeal/bacterial/fungal opsin family.

Its subcellular location is the cell membrane. Light-driven chloride pump. The sequence is that of Cruxhalorhodopsin-3 (choP3) from Haloarcula vallismortis (Halobacterium vallismortis).